The sequence spans 252 residues: Imidazole glycerol phosphate synthase subunit HisF (252 aa).

Active-site residues include D12 and D131.

The protein belongs to the HisA/HisF family. In terms of assembly, heterodimer of HisH and HisF.

It is found in the cytoplasm. It carries out the reaction 5-[(5-phospho-1-deoxy-D-ribulos-1-ylimino)methylamino]-1-(5-phospho-beta-D-ribosyl)imidazole-4-carboxamide + L-glutamine = D-erythro-1-(imidazol-4-yl)glycerol 3-phosphate + 5-amino-1-(5-phospho-beta-D-ribosyl)imidazole-4-carboxamide + L-glutamate + H(+). Its pathway is amino-acid biosynthesis; L-histidine biosynthesis; L-histidine from 5-phospho-alpha-D-ribose 1-diphosphate: step 5/9. In terms of biological role, IGPS catalyzes the conversion of PRFAR and glutamine to IGP, AICAR and glutamate. The HisF subunit catalyzes the cyclization activity that produces IGP and AICAR from PRFAR using the ammonia provided by the HisH subunit. In Thermus thermophilus (strain ATCC 27634 / DSM 579 / HB8), this protein is Imidazole glycerol phosphate synthase subunit HisF.